The chain runs to 101 residues: Small ribosomal subunit protein uS14 (101 aa).

It belongs to the universal ribosomal protein uS14 family. In terms of assembly, part of the 30S ribosomal subunit. Contacts proteins S3 and S10.

Functionally, binds 16S rRNA, required for the assembly of 30S particles and may also be responsible for determining the conformation of the 16S rRNA at the A site. The protein is Small ribosomal subunit protein uS14 of Brucella abortus (strain S19).